The chain runs to 115 residues: MGGCPVRKRRRNGSKEGNHHSTQPKRNKRNPIFQDSQDTEFSWSDNERSSSRINIPERASGPEGNLNQIVTEPDANFPQFLHEGLSKPVYVINWFMSFGPEIKLNTSQQGRNQAV.

A compositionally biased stretch (basic residues) spans 1 to 12 (MGGCPVRKRRRN). The segment at 1 to 70 (MGGCPVRKRR…GPEGNLNQIV (70 aa)) is disordered. Over residues 33-44 (FQDSQDTEFSWS) the composition is skewed to polar residues.

It belongs to the VCF family.

The sequence is that of Protein VCF2 from Homo sapiens (Human).